A 307-amino-acid chain; its full sequence is Mitochondrial brown fat uncoupling protein 1 (307 aa).

The Mitochondrial intermembrane portion of the chain corresponds to 1–10; the sequence is MVSLTTSEVH. The chain crosses the membrane as a helical span at residues 11 to 32; the sequence is PTMGVKTFSAGISACLADIITF. Solcar repeat units follow at residues 11–102, 111–201, and 210–295; these read PTMG…VQEY, PTLG…MKGA, and DDVP…LKKE. Topologically, residues 33–73 are mitochondrial matrix; it reads PLDTAKVRLQIQGEGQTSSTIRYKGVLGTITTLAKTEGWPK. Residue lysine 56 participates in fatty acid 16:0 binding. The helical transmembrane segment at 74 to 96 threads the bilayer; the sequence is LYSGLPAGIQRQISFASLRIGLY. The Mitochondrial intermembrane segment spans residues 97-116; that stretch reads DTVQEYFSSGKETPPTLGNR. The helical transmembrane segment at 117–133 threads the bilayer; that stretch reads ISAGLMTGGVAVFIGQP. Topologically, residues 134–178 are mitochondrial matrix; the sequence is TEVVKVRLQAQSHLHGIKPRYTGTYNAYRIIATTESFSTLWKGTT. The helical transmembrane segment at 179–195 threads the bilayer; the sequence is PNLMRNVIINRTELVTY. At 196 to 212 the chain is on the mitochondrial intermembrane side; sequence DLMKGALVNNQILADDV. A helical membrane pass occupies residues 213–232; it reads PCHLLSALVAGFCTTFLASP. Topologically, residues 233–266 are mitochondrial matrix; the sequence is ADVVKTRFINSLPGQYPSVPSCAMTMLTKEGPTA. Cysteine 254 bears the Cysteine sulfenic acid (-SOH) mark. The chain crosses the membrane as a helical span at residues 267–289; it reads FFKGFVPSFLRLASWNVIMFVCF. Residue lysine 269 coordinates fatty acid 16:0. Residues 290 to 307 lie on the Mitochondrial intermembrane side of the membrane; sequence EQLKKELMKSRQTMDCTT.

This sequence belongs to the mitochondrial carrier (TC 2.A.29) family. In terms of assembly, most probably functions as a monomer. Binds one purine nucleotide per monomer. However, has also been suggested to function as a homodimer or a homotetramer. Tightly associates with cardiolipin in the mitochondrion inner membrane; may stabilize and regulate its activity. In terms of processing, may undergo sulfenylation upon cold exposure. May increase the sensitivity of UCP1 thermogenic function to the activation by noradrenaline probably through structural effects. May undergo ubiquitin-mediated proteasomal degradation.

Its subcellular location is the mitochondrion inner membrane. The catalysed reaction is H(+)(in) = H(+)(out). Has no constitutive proton transporter activity and has to be activated by long-chain fatty acids/LCFAs. Inhibited by purine nucleotides. Both purine nucleotides and LCFAs bind the cytosolic side of the transporter and directly compete to activate or inhibit it. Activated by noradrenaline and reactive oxygen species. Despite lacking canonical translational encoding for selenocysteine, a small pool of the protein has been observed to selectively incorporate selenocysteine at 'Cys-254'. Selenocysteine-modified protein is highly sensitive to redox modification and may constitute a pool of protein highly sensitive to activation by elevated levels of reactive oxygen species (ROS). Mitochondrial protein responsible for thermogenic respiration, a specialized capacity of brown adipose tissue and beige fat that participates in non-shivering adaptive thermogenesis to temperature and diet variations and more generally to the regulation of energy balance. Functions as a long-chain fatty acid/LCFA and proton symporter, simultaneously transporting one LCFA and one proton through the inner mitochondrial membrane. However, LCFAs remaining associated with the transporter via their hydrophobic tails, it results in an apparent transport of protons activated by LCFAs. Thereby, dissipates the mitochondrial proton gradient and converts the energy of substrate oxydation into heat instead of ATP. Regulates the production of reactive oxygen species/ROS by mitochondria. This Dicrostonyx groenlandicus (Northern collared lemming) protein is Mitochondrial brown fat uncoupling protein 1.